Reading from the N-terminus, the 233-residue chain is Probable dihydroorotate dehydrogenase B (NAD(+)), electron transfer subunit (233 aa).

The FAD-binding FR-type domain occupies 1–87 (MYRVVTIEEV…RGPYGHGFIK (87 aa)). [2Fe-2S] cluster contacts are provided by cysteine 202, cysteine 207, cysteine 210, and cysteine 218.

Belongs to the PyrK family. In terms of assembly, heterotetramer of 2 PyrK and 2 PyrD type B subunits. [2Fe-2S] cluster is required as a cofactor. FAD serves as cofactor.

Its pathway is pyrimidine metabolism; UMP biosynthesis via de novo pathway; orotate from (S)-dihydroorotate (NAD(+) route): step 1/1. In terms of biological role, responsible for channeling the electrons from the oxidation of dihydroorotate from the FMN redox center in the PyrD type B subunit to the ultimate electron acceptor NAD(+). The sequence is that of Probable dihydroorotate dehydrogenase B (NAD(+)), electron transfer subunit from Thermococcus kodakarensis (strain ATCC BAA-918 / JCM 12380 / KOD1) (Pyrococcus kodakaraensis (strain KOD1)).